The primary structure comprises 493 residues: Ketol-acid reductoisomerase (NADP(+)) (493 aa).

Positions 14 to 208 constitute a KARI N-terminal Rossmann domain; that stretch reads LDQLGRCRFM…GGDRAGVLES (195 aa). Residues 45 to 48, Arg-68, Arg-76, Ser-78, and 108 to 110 each bind NADP(+); these read CGAQ and DKQ. The active site involves His-132. An NADP(+)-binding site is contributed by Gly-158. KARI C-terminal knotted domains are found at residues 209-345 and 346-486; these read SFVA…APKA and DGIK…MTDM. The Mg(2+) site is built by Asp-217, Glu-221, Glu-390, and Glu-394. Position 415 (Ser-415) interacts with substrate.

Belongs to the ketol-acid reductoisomerase family. It depends on Mg(2+) as a cofactor.

The catalysed reaction is (2R)-2,3-dihydroxy-3-methylbutanoate + NADP(+) = (2S)-2-acetolactate + NADPH + H(+). It catalyses the reaction (2R,3R)-2,3-dihydroxy-3-methylpentanoate + NADP(+) = (S)-2-ethyl-2-hydroxy-3-oxobutanoate + NADPH + H(+). It participates in amino-acid biosynthesis; L-isoleucine biosynthesis; L-isoleucine from 2-oxobutanoate: step 2/4. The protein operates within amino-acid biosynthesis; L-valine biosynthesis; L-valine from pyruvate: step 2/4. Involved in the biosynthesis of branched-chain amino acids (BCAA). Catalyzes an alkyl-migration followed by a ketol-acid reduction of (S)-2-acetolactate (S2AL) to yield (R)-2,3-dihydroxy-isovalerate. In the isomerase reaction, S2AL is rearranged via a Mg-dependent methyl migration to produce 3-hydroxy-3-methyl-2-ketobutyrate (HMKB). In the reductase reaction, this 2-ketoacid undergoes a metal-dependent reduction by NADPH to yield (R)-2,3-dihydroxy-isovalerate. The protein is Ketol-acid reductoisomerase (NADP(+)) of Actinobacillus succinogenes (strain ATCC 55618 / DSM 22257 / CCUG 43843 / 130Z).